The chain runs to 125 residues: Large ribosomal subunit protein bL12 (125 aa).

The protein belongs to the bacterial ribosomal protein bL12 family. In terms of assembly, homodimer. Part of the ribosomal stalk of the 50S ribosomal subunit. Forms a multimeric L10(L12)X complex, where L10 forms an elongated spine to which 2 to 4 L12 dimers bind in a sequential fashion. Binds GTP-bound translation factors.

Functionally, forms part of the ribosomal stalk which helps the ribosome interact with GTP-bound translation factors. Is thus essential for accurate translation. In Nitrobacter winogradskyi (strain ATCC 25391 / DSM 10237 / CIP 104748 / NCIMB 11846 / Nb-255), this protein is Large ribosomal subunit protein bL12.